Consider the following 183-residue polypeptide: Capsid protein (183 aa).

Residues 136 to 183 are disordered; sequence NAPILSTLPETTVVRRRGRSPRRRTPSPRRRRSQSPRRRRSQSRESQC. Residues 149–176 are compositionally biased toward basic residues; the sequence is VRRRGRSPRRRTPSPRRRRSQSPRRRRS. 3 positions are modified to phosphoserine; by host: S155, S162, and S170. One copy of the 1; half-length repeat lies at 155-161; it reads SPRRRTP. The segment at 155 to 177 is 3 X 8 AA repeats of S-P-R-R-R-[PR]-S-Q; the sequence is SPRRRTPSPRRRRSQSPRRRRSQ. Positions 158-175 match the Bipartite nuclear localization signal motif; the sequence is RRTPSPRRRRSQSPRRRR. 2 repeat units span residues 162-169 and 170-177. Residues 177-183 are RNA binding; sequence QSRESQC.

The protein belongs to the orthohepadnavirus core antigen family. Homodimerizes, then multimerizes. Interacts with cytosol exposed regions of viral L glycoprotein present in the reticulum-to-Golgi compartment. Interacts with human FLNB. Phosphorylated form interacts with host importin alpha; this interaction depends on the exposure of the NLS, which itself depends upon genome maturation and/or phosphorylation of the capsid protein. Interacts with host NUP153. Phosphorylated by host SRPK1, SRPK2, and maybe protein kinase C or GAPDH. Phosphorylation is critical for pregenomic RNA packaging. Protein kinase C phosphorylation is stimulated by HBx protein and may play a role in transport of the viral genome to the nucleus at the late step during the viral replication cycle.

The protein localises to the virion. It localises to the host cytoplasm. Its function is as follows. Self assembles to form an icosahedral capsid. Most capsids appear to be large particles with an icosahedral symmetry of T=4 and consist of 240 copies of capsid protein, though a fraction forms smaller T=3 particles consisting of 180 capsid proteins. Entering capsids are transported along microtubules to the nucleus. Phosphorylation of the capsid is thought to induce exposure of nuclear localization signal in the C-terminal portion of the capsid protein that allows binding to the nuclear pore complex via the importin (karyopherin-) alpha and beta. Capsids are imported in intact form through the nuclear pore into the nuclear basket, where it probably binds NUP153. Only capsids that contain the mature viral genome can release the viral DNA and capsid protein into the nucleoplasm. Immature capsids get stuck in the basket. Capsids encapsulate the pre-genomic RNA and the P protein. Pre-genomic RNA is reverse-transcribed into DNA while the capsid is still in the cytoplasm. The capsid can then either be directed to the nucleus, providing more genomes for transcription, or bud through the endoplasmic reticulum to provide new virions. This is Capsid protein from Homo sapiens (Human).